The chain runs to 539 residues: Probable malate:quinone oxidoreductase 3 (539 aa).

A disordered region spans residues 516–539 (LEPPVSPQRPESIRPADSQGVASR).

It belongs to the MQO family. FAD serves as cofactor.

The catalysed reaction is (S)-malate + a quinone = a quinol + oxaloacetate. It functions in the pathway carbohydrate metabolism; tricarboxylic acid cycle; oxaloacetate from (S)-malate (quinone route): step 1/1. The polypeptide is Probable malate:quinone oxidoreductase 3 (Pseudomonas putida (strain ATCC 47054 / DSM 6125 / CFBP 8728 / NCIMB 11950 / KT2440)).